A 376-amino-acid chain; its full sequence is Queuine tRNA-ribosyltransferase (376 aa).

Aspartate 93 (proton acceptor) is an active-site residue. Substrate contacts are provided by residues 93–97 (DSGGF), aspartate 147, glutamine 191, and glycine 218. Positions 249–255 (GVGKPED) are RNA binding. The Nucleophile role is filled by aspartate 268. The tract at residues 273–277 (TRNAR) is RNA binding; important for wobble base 34 recognition. Residues cysteine 306, cysteine 308, cysteine 311, and histidine 337 each coordinate Zn(2+).

The protein belongs to the queuine tRNA-ribosyltransferase family. In terms of assembly, homodimer. Within each dimer, one monomer is responsible for RNA recognition and catalysis, while the other monomer binds to the replacement base PreQ1. Zn(2+) serves as cofactor.

The catalysed reaction is 7-aminomethyl-7-carbaguanine + guanosine(34) in tRNA = 7-aminomethyl-7-carbaguanosine(34) in tRNA + guanine. The protein operates within tRNA modification; tRNA-queuosine biosynthesis. Functionally, catalyzes the base-exchange of a guanine (G) residue with the queuine precursor 7-aminomethyl-7-deazaguanine (PreQ1) at position 34 (anticodon wobble position) in tRNAs with GU(N) anticodons (tRNA-Asp, -Asn, -His and -Tyr). Catalysis occurs through a double-displacement mechanism. The nucleophile active site attacks the C1' of nucleotide 34 to detach the guanine base from the RNA, forming a covalent enzyme-RNA intermediate. The proton acceptor active site deprotonates the incoming PreQ1, allowing a nucleophilic attack on the C1' of the ribose to form the product. After dissociation, two additional enzymatic reactions on the tRNA convert PreQ1 to queuine (Q), resulting in the hypermodified nucleoside queuosine (7-(((4,5-cis-dihydroxy-2-cyclopenten-1-yl)amino)methyl)-7-deazaguanosine). The chain is Queuine tRNA-ribosyltransferase from Histophilus somni (strain 129Pt) (Haemophilus somnus).